The chain runs to 126 residues: UPF0538 protein C2orf76 homolog (126 aa).

It belongs to the UPF0538 family.

This Danio rerio (Zebrafish) protein is UPF0538 protein C2orf76 homolog.